Reading from the N-terminus, the 256-residue chain is Probable transcriptional regulatory protein A1I_03240 (256 aa).

The tract at residues 1–21 (MAGHSKFKNIQHRKGAQDKKR) is disordered.

The protein belongs to the TACO1 family.

The protein localises to the cytoplasm. In Rickettsia bellii (strain OSU 85-389), this protein is Probable transcriptional regulatory protein A1I_03240.